The primary structure comprises 273 residues: F-actin-capping protein subunit alpha (273 aa).

This sequence belongs to the F-actin-capping protein alpha subunit family. Heterodimer of an alpha and a beta subunit.

It is found in the cytoplasm. The protein resides in the cytoskeleton. F-actin-capping proteins bind in a Ca(2+)-independent manner to the fast growing ends of actin filaments (barbed end) thereby blocking the exchange of subunits at these ends. Unlike other capping proteins (such as gelsolin and severin), these proteins do not sever actin filaments. The chain is F-actin-capping protein subunit alpha (CAP1) from Gibberella zeae (strain ATCC MYA-4620 / CBS 123657 / FGSC 9075 / NRRL 31084 / PH-1) (Wheat head blight fungus).